A 487-amino-acid polypeptide reads, in one-letter code: Solute carrier family 22 member 15-like (487 aa).

A helical transmembrane segment spans residues A22–G42. The N-linked (GlcNAc...) asparagine glycan is linked to N70. 11 helical membrane-spanning segments follow: residues L90–S110, P117–P137, V141–F161, S178–I198, T203–P223, I286–A306, L315–I335, A345–E365, T374–Y394, A406–P426, and M435–P455.

This sequence belongs to the major facilitator (TC 2.A.1) superfamily. Organic cation transporter (TC 2.A.1.19) family.

The protein resides in the membrane. Probably transports organic cations. This chain is Solute carrier family 22 member 15-like (slc22a15b), found in Xenopus tropicalis (Western clawed frog).